Here is a 227-residue protein sequence, read N- to C-terminus: Cytochrome c oxidase subunit 2 (227 aa).

The Mitochondrial intermembrane portion of the chain corresponds to 1–26 (MATWSNLNLQNSSSPLMEQLIFFHDH). A helical transmembrane segment spans residues 27–48 (TLMILLMITVLVAYIMSMLFFN). Residues 49–62 (LYTNRFLLEGQTIE) are Mitochondrial matrix-facing. The helical transmembrane segment at 63–82 (IIWTILPAITLIFIALPSLR) threads the bilayer. Residues 83–227 (LLYLLDESMD…FINWIKNYSS (145 aa)) are Mitochondrial intermembrane-facing. Cu cation contacts are provided by His-160, Cys-195, Glu-197, Cys-199, His-203, and Met-206. Glu-197 is a binding site for Mg(2+).

It belongs to the cytochrome c oxidase subunit 2 family. As to quaternary structure, component of the cytochrome c oxidase (complex IV, CIV), a multisubunit enzyme composed of a catalytic core of 3 subunits and several supernumerary subunits. The complex exists as a monomer or a dimer and forms supercomplexes (SCs) in the inner mitochondrial membrane with ubiquinol-cytochrome c oxidoreductase (cytochrome b-c1 complex, complex III, CIII). Cu cation is required as a cofactor.

It is found in the mitochondrion inner membrane. It catalyses the reaction 4 Fe(II)-[cytochrome c] + O2 + 8 H(+)(in) = 4 Fe(III)-[cytochrome c] + 2 H2O + 4 H(+)(out). In terms of biological role, component of the cytochrome c oxidase, the last enzyme in the mitochondrial electron transport chain which drives oxidative phosphorylation. The respiratory chain contains 3 multisubunit complexes succinate dehydrogenase (complex II, CII), ubiquinol-cytochrome c oxidoreductase (cytochrome b-c1 complex, complex III, CIII) and cytochrome c oxidase (complex IV, CIV), that cooperate to transfer electrons derived from NADH and succinate to molecular oxygen, creating an electrochemical gradient over the inner membrane that drives transmembrane transport and the ATP synthase. Cytochrome c oxidase is the component of the respiratory chain that catalyzes the reduction of oxygen to water. Electrons originating from reduced cytochrome c in the intermembrane space (IMS) are transferred via the dinuclear copper A center (CU(A)) of subunit 2 and heme A of subunit 1 to the active site in subunit 1, a binuclear center (BNC) formed by heme A3 and copper B (CU(B)). The BNC reduces molecular oxygen to 2 water molecules using 4 electrons from cytochrome c in the IMS and 4 protons from the mitochondrial matrix. This is Cytochrome c oxidase subunit 2 (COII) from Acheta domesticus (House cricket).